Consider the following 425-residue polypeptide: Serine--tRNA ligase (425 aa).

231-233 is a binding site for L-serine; sequence TAE. An ATP-binding site is contributed by 262–264; the sequence is RSE. Glu-285 lines the L-serine pocket. An ATP-binding site is contributed by 349–352; sequence EISS. Ser-385 contributes to the L-serine binding site.

Belongs to the class-II aminoacyl-tRNA synthetase family. Type-1 seryl-tRNA synthetase subfamily. As to quaternary structure, homodimer. The tRNA molecule binds across the dimer.

The protein localises to the cytoplasm. The catalysed reaction is tRNA(Ser) + L-serine + ATP = L-seryl-tRNA(Ser) + AMP + diphosphate + H(+). It carries out the reaction tRNA(Sec) + L-serine + ATP = L-seryl-tRNA(Sec) + AMP + diphosphate + H(+). It participates in aminoacyl-tRNA biosynthesis; selenocysteinyl-tRNA(Sec) biosynthesis; L-seryl-tRNA(Sec) from L-serine and tRNA(Sec): step 1/1. Catalyzes the attachment of serine to tRNA(Ser). Is also able to aminoacylate tRNA(Sec) with serine, to form the misacylated tRNA L-seryl-tRNA(Sec), which will be further converted into selenocysteinyl-tRNA(Sec). The chain is Serine--tRNA ligase from Alkaliphilus oremlandii (strain OhILAs) (Clostridium oremlandii (strain OhILAs)).